A 266-amino-acid polypeptide reads, in one-letter code: Signal peptidase I (266 aa).

Residues 1-20 (MQTDNTKSNTNKTAKQEWGS) lie on the Cytoplasmic side of the membrane. The helical transmembrane segment at 21-41 (FVFVICIALLIRILIMEPFTV) threads the bilayer. Topologically, residues 42–266 (PTGSMKATIL…IFRNLYNTDV (225 aa)) are periplasmic. Residues Ser45 and Lys108 contribute to the active site.

This sequence belongs to the peptidase S26 family.

The protein resides in the cell inner membrane. The enzyme catalyses Cleavage of hydrophobic, N-terminal signal or leader sequences from secreted and periplasmic proteins.. In Rickettsia massiliae (strain Mtu5), this protein is Signal peptidase I (lepB).